The chain runs to 157 residues: UPF0254 protein MTH_1148 (157 aa).

This sequence belongs to the UPF0254 family.

The protein is UPF0254 protein MTH_1148 of Methanothermobacter thermautotrophicus (strain ATCC 29096 / DSM 1053 / JCM 10044 / NBRC 100330 / Delta H) (Methanobacterium thermoautotrophicum).